Here is a 463-residue protein sequence, read N- to C-terminus: Trigger factor (463 aa).

Residues 162-243 (GDHVSIDLSA…VHSVKLKELP (82 aa)) enclose the PPIase FKBP-type domain. Over residues 427–444 (SGNTIEPPTPVHTETITV) the composition is skewed to polar residues. The segment at 427–463 (SGNTIEPPTPVHTETITVASGDEETEESAAEQGETEK) is disordered.

The protein belongs to the FKBP-type PPIase family. Tig subfamily.

The protein resides in the cytoplasm. It carries out the reaction [protein]-peptidylproline (omega=180) = [protein]-peptidylproline (omega=0). Involved in protein export. Acts as a chaperone by maintaining the newly synthesized protein in an open conformation. Functions as a peptidyl-prolyl cis-trans isomerase. The protein is Trigger factor of Thermobifida fusca (strain YX).